The sequence spans 363 residues: Chorismate synthase (363 aa).

Arg-48 and Arg-54 together coordinate NADP(+). FMN is bound by residues 125 to 127 (RSS), 237 to 238 (NA), Gly-277, 292 to 296 (KPTSS), and Arg-318.

The protein belongs to the chorismate synthase family. In terms of assembly, homotetramer. The cofactor is FMNH2.

The enzyme catalyses 5-O-(1-carboxyvinyl)-3-phosphoshikimate = chorismate + phosphate. Its pathway is metabolic intermediate biosynthesis; chorismate biosynthesis; chorismate from D-erythrose 4-phosphate and phosphoenolpyruvate: step 7/7. Catalyzes the anti-1,4-elimination of the C-3 phosphate and the C-6 proR hydrogen from 5-enolpyruvylshikimate-3-phosphate (EPSP) to yield chorismate, which is the branch point compound that serves as the starting substrate for the three terminal pathways of aromatic amino acid biosynthesis. This reaction introduces a second double bond into the aromatic ring system. In Pseudomonas entomophila (strain L48), this protein is Chorismate synthase.